Here is a 391-residue protein sequence, read N- to C-terminus: Multidrug resistance protein MdtL (391 aa).

12 helical membrane-spanning segments follow: residues 4–24, 42–62, 69–89, 93–113, 131–151, 158–178, 203–222, 245–265, 269–289, 293–313, 331–351, and 356–376; these read FLIC…MYLV, IAFS…GKVA, PVAI…SLAE, LFLA…VVAF, LLNG…HLIM, SLFW…LFIL, FFLS…LTFV, ALTA…LGIF, TLMI…AVSP, VSLF…GVAM, LGIA…VVGI, and MLIG…MFVA.

It belongs to the major facilitator superfamily. DHA1 family. MdtL (TC 2.A.1.2.22) subfamily.

Its subcellular location is the cell inner membrane. Functionally, confers resistance to chloramphenicol. This is Multidrug resistance protein MdtL from Escherichia coli O17:K52:H18 (strain UMN026 / ExPEC).